The chain runs to 224 residues: Small ribosomal subunit protein uS3 (224 aa).

Residues 20 to 89 (LDEFLANYFK…NVNITVSPVP (70 aa)) form the KH type-2 domain.

The protein belongs to the universal ribosomal protein uS3 family. In terms of assembly, part of the 30S ribosomal subunit.

Binds the lower part of the 30S subunit head. This Staphylothermus marinus (strain ATCC 43588 / DSM 3639 / JCM 9404 / F1) protein is Small ribosomal subunit protein uS3.